A 248-amino-acid chain; its full sequence is Large ribosomal subunit protein uL30 (248 aa).

Residues 22 to 42 (KSQEKARAERQAEIEKKKAAN) are disordered. Residues 24 to 42 (QEKARAERQAEIEKKKAAN) are compositionally biased toward basic and acidic residues.

It belongs to the universal ribosomal protein uL30 family. In terms of assembly, component of the large ribosomal subunit (LSU). Mature N.crassa ribosomes consist of a small (40S) and a large (60S) subunit. The 40S small subunit contains 1 molecule of ribosomal RNA (18S rRNA) and at least 32 different proteins. The large 60S subunit contains 3 rRNA molecules (26S, 5.8S and 5S rRNA) and at least 42 different proteins.

Its subcellular location is the cytoplasm. Component of the ribosome, a large ribonucleoprotein complex responsible for the synthesis of proteins in the cell. The small ribosomal subunit (SSU) binds messenger RNAs (mRNAs) and translates the encoded message by selecting cognate aminoacyl-transfer RNA (tRNA) molecules. The large subunit (LSU) contains the ribosomal catalytic site termed the peptidyl transferase center (PTC), which catalyzes the formation of peptide bonds, thereby polymerizing the amino acids delivered by tRNAs into a polypeptide chain. The nascent polypeptides leave the ribosome through a tunnel in the LSU and interact with protein factors that function in enzymatic processing, targeting, and the membrane insertion of nascent chains at the exit of the ribosomal tunnel. This Neurospora crassa (strain ATCC 24698 / 74-OR23-1A / CBS 708.71 / DSM 1257 / FGSC 987) protein is Large ribosomal subunit protein uL30 (rpl-7).